A 276-amino-acid polypeptide reads, in one-letter code: Formamidopyrimidine-DNA glycosylase (276 aa).

P2 (schiff-base intermediate with DNA) is an active-site residue. E3 acts as the Proton donor in catalysis. K58 serves as the catalytic Proton donor; for beta-elimination activity. Residues H92, R111, and R153 each contribute to the DNA site. Residues 238–272 (TVYGRERQNCLNCSSTIIKTKHSGRSTFYCRTCQY) form an FPG-type zinc finger. Catalysis depends on R262, which acts as the Proton donor; for delta-elimination activity.

It belongs to the FPG family. Monomer. It depends on Zn(2+) as a cofactor.

The enzyme catalyses Hydrolysis of DNA containing ring-opened 7-methylguanine residues, releasing 2,6-diamino-4-hydroxy-5-(N-methyl)formamidopyrimidine.. The catalysed reaction is 2'-deoxyribonucleotide-(2'-deoxyribose 5'-phosphate)-2'-deoxyribonucleotide-DNA = a 3'-end 2'-deoxyribonucleotide-(2,3-dehydro-2,3-deoxyribose 5'-phosphate)-DNA + a 5'-end 5'-phospho-2'-deoxyribonucleoside-DNA + H(+). Its function is as follows. Involved in base excision repair of DNA damaged by oxidation or by mutagenic agents. Acts as a DNA glycosylase that recognizes and removes damaged bases. Has a preference for oxidized purines, such as 7,8-dihydro-8-oxoguanine (8-oxoG). Has AP (apurinic/apyrimidinic) lyase activity and introduces nicks in the DNA strand. Cleaves the DNA backbone by beta-delta elimination to generate a single-strand break at the site of the removed base with both 3'- and 5'-phosphates. This is Formamidopyrimidine-DNA glycosylase from Rickettsia felis (strain ATCC VR-1525 / URRWXCal2) (Rickettsia azadi).